Consider the following 275-residue polypeptide: uncharacterized protein (275 aa).

Mg(2+) contacts are provided by E71, D85, I87, and D88. E71 contacts substrate. 87–90 provides a ligand contact to substrate; sequence IDGT. 3 helical membrane passes run 87 to 107, 112 to 132, and 178 to 198; these read IDGTANFLSGIPLWAVSIAFV, PVLGAVALPALDTLLWASVDG, and IVCLGSCAAALAMVAAGRLAG. D208 serves as a coordination point for Mg(2+). Position 208 (D208) interacts with substrate.

This sequence belongs to the inositol monophosphatase superfamily.

It is found in the cell membrane. This is an uncharacterized protein from Sinorhizobium fredii (strain NBRC 101917 / NGR234).